Here is a 60-residue protein sequence, read N- to C-terminus: Large ribosomal subunit protein bL32 (60 aa).

The segment covering 1–20 has biased composition (basic residues); the sequence is MACPKKKTSKSKRSMRRAAW. Residues 1-22 form a disordered region; sequence MACPKKKTSKSKRSMRRAAWKR.

This sequence belongs to the bacterial ribosomal protein bL32 family.

The protein is Large ribosomal subunit protein bL32 of Thermosynechococcus vestitus (strain NIES-2133 / IAM M-273 / BP-1).